The following is a 307-amino-acid chain: Shikimate kinase 2, chloroplastic (307 aa).

Residues 1-60 constitute a chloroplast transit peptide; the sequence is MEARAGLAMQSRAAVGVGAGPGVGRRGRAVIRVGKRPTAASLRVGGPAGPAAAKPLAPLY. 101–108 lines the ATP pocket; the sequence is GMMGSGKS. Ser-108 lines the Mg(2+) pocket. Residues Asp-126, Arg-151, and Gly-173 each contribute to the substrate site. An ATP-binding site is contributed by Arg-212. The segment at 285-307 is disordered; sequence HSTSSGPVGDLIVDSQNRRTKAL.

Belongs to the shikimate kinase family. Requires Mg(2+) as cofactor. As to expression, expressed in panicles.

It localises to the plastid. Its subcellular location is the chloroplast. It carries out the reaction shikimate + ATP = 3-phosphoshikimate + ADP + H(+). It participates in metabolic intermediate biosynthesis; chorismate biosynthesis; chorismate from D-erythrose 4-phosphate and phosphoenolpyruvate: step 5/7. Functionally, catalyzes the specific phosphorylation of the 3-hydroxyl group of shikimic acid using ATP as a cosubstrate. In Oryza sativa subsp. japonica (Rice), this protein is Shikimate kinase 2, chloroplastic (SK2).